We begin with the raw amino-acid sequence, 52 residues long: Dibenzothiophene metabolism operon protein NahQ/DoxH (52 aa).

The protein operates within aromatic compound metabolism; naphthalene degradation. Its function is as follows. May be involved in the conversion of 2-hydroxy-4-(2'-oxo-3,5-cyclohexadienyl)-buta-2,4-dienoate to cis-O-hydroxybenzylidenepyruvate. DoxH and DoxJ encode different enzymes that may have interchangeable functions. The protein is Dibenzothiophene metabolism operon protein NahQ/DoxH (nahQ) of Pseudomonas putida (Arthrobacter siderocapsulatus).